The chain runs to 1065 residues: Outer capsid protein VP3 (1065 aa).

It is found in the virion. The catalysed reaction is a 5'-end diphospho-ribonucleoside in mRNA + GTP + H(+) = a 5'-end (5'-triphosphoguanosine)-ribonucleoside in mRNA + diphosphate. It carries out the reaction a 5'-end (5'-triphosphoguanosine)-ribonucleoside in mRNA + S-adenosyl-L-methionine = a 5'-end (N(7)-methyl 5'-triphosphoguanosine)-ribonucleoside in mRNA + S-adenosyl-L-homocysteine. Functionally, outer capsid protein involved in mRNA capping. Catalyzes the last 3 enzymatic activities for formation of the 5' cap structure on the viral plus-strand transcripts, namely the RNA guanylyltransferase, RNA-7N- and RNA-2'O-methyltransferase activities. The protein is Outer capsid protein VP3 (S3) of Cryphonectria parasitica mycoreovirus 1 (strain 9B21) (CpMYRV-1).